Reading from the N-terminus, the 257-residue chain is Aspartate/glutamate leucyltransferase (257 aa).

Belongs to the R-transferase family. Bpt subfamily.

It is found in the cytoplasm. The catalysed reaction is N-terminal L-glutamyl-[protein] + L-leucyl-tRNA(Leu) = N-terminal L-leucyl-L-glutamyl-[protein] + tRNA(Leu) + H(+). The enzyme catalyses N-terminal L-aspartyl-[protein] + L-leucyl-tRNA(Leu) = N-terminal L-leucyl-L-aspartyl-[protein] + tRNA(Leu) + H(+). In terms of biological role, functions in the N-end rule pathway of protein degradation where it conjugates Leu from its aminoacyl-tRNA to the N-termini of proteins containing an N-terminal aspartate or glutamate. The polypeptide is Aspartate/glutamate leucyltransferase (Phenylobacterium zucineum (strain HLK1)).